Reading from the N-terminus, the 409-residue chain is 2-methylfumaryl-CoA isomerase (409 aa).

Asp-165 serves as the catalytic Nucleophile.

Belongs to the CoA-transferase III family. Mesaconyl-CoA isomerase subfamily. As to quaternary structure, homodimer.

The enzyme catalyses 2-methylfumaryl-CoA = 3-methylfumaryl-CoA. Partially inhibited by hydroxylamine. In terms of biological role, involved in the glyoxylate assimilation cycle used to regenerate acetyl-CoA and produce pyruvate as universal precursor for biosynthesis. This reaction involves an intramolecular CoA transferase that catalyzes the reversible transfer of the CoA moiety from the C1-carboxyl group of mesaconyl-CoA to the C4-carboxyl group. It does not require free mesaconate as CoA acceptor. In Chloroflexus aurantiacus (strain ATCC 29366 / DSM 635 / J-10-fl), this protein is 2-methylfumaryl-CoA isomerase (mct).